We begin with the raw amino-acid sequence, 1813 residues long: U3 small nucleolar RNA-associated protein 10 (1813 aa).

5 HEAT repeats span residues 245 to 283, 389 to 427, 428 to 464, 584 to 621, and 659 to 695; these read DVLIRILPVLNDAFMLRKAPQLVVGCYMLCVVLANKASL, SETIEALTILLQAFSDLQRQGLVADGMGKQLSDLLLQFN, ESDTLAPLLRKAIENAGVDITQLEMTLETVLQADIMP, ADMQGILPYIISALADPSERVRREAAALLSLIDRLASK, and IIHHALMPALEEYVLDPDQVGRTLTQVIRGPRSQDDS. Disordered stretches follow at residues 686–705 and 887–912; these read IRGPRSQDDSDRTRSESTGV and DLGSRGPPSKKRRTSQNNMVPMSSMD. Positions 690–705 are enriched in basic and acidic residues; the sequence is RSQDDSDRTRSESTGV. HEAT repeat units lie at residues 1058–1095, 1189–1228, 1265–1302, 1309–1347, 1398–1437, 1678–1715, and 1769–1806; these read QTIDQVVPPLVQSLRNQKRDVVSGTSELLLSFTTAFEH, KIAVDLLQALSHLLKFTSLRTKMSECFDSGTEQQVDKAHG, LSLVDFVDTIEVLLQRPSDDLRRKVIKLLENRLDSSND, ARVLSFLTVLINILETSPDILLKHAAVACIEKIGEKYGK, EALPRAIDLLRDTLAASDDDSQLHDAVYSLISALLIHVPW, LASISEPLIKQLSMATNSPTLDLVAAEAIPTIVELAVA, and ALLPEMLPYISELLEDDDENVEREVRRWVLSIEDILGE.

The protein belongs to the HEATR1/UTP10 family. In terms of assembly, component of the ribosomal small subunit (SSU) processome.

The protein resides in the nucleus. Its subcellular location is the nucleolus. In terms of biological role, involved in nucleolar processing of pre-18S ribosomal RNA. Involved in ribosome biosynthesis. This is U3 small nucleolar RNA-associated protein 10 from Coccidioides immitis (strain RS) (Valley fever fungus).